We begin with the raw amino-acid sequence, 489 residues long: Actin-related protein 4 (489 aa).

The disordered stretch occupies residues 323-379; that stretch reads KRTKPSGVNKSDKKVTPTEEKEQEAVSKSTSPAANSADTPNETGKRPLEEEKPPKEN. Residues 332-347 show a composition bias toward basic and acidic residues; the sequence is KSDKKVTPTEEKEQEA. A compositionally biased stretch (polar residues) spans 348-364; that stretch reads VSKSTSPAANSADTPNE. Ser-349 is subject to Phosphoserine. Residues 365-379 are compositionally biased toward basic and acidic residues; that stretch reads TGKRPLEEEKPPKEN.

This sequence belongs to the actin family. ARP4 subfamily. In terms of assembly, component of the NuA4 histone acetyltransferase complex composed of at least ACT1, ARP4, EAF3, EAF5, EAF6, EAF7, EPL1, ESA1, SWC4, TRA1, VID21, YAF9 and YNG2. Component of the chromatin-remodeling INO80 complex, at least composed of ARP4, ARP5, ARP8, RVB1, RVB2, TAF14, NHP10, IES1, IES3, IES4, IES6, ACT1, IES2, IES5 and INO80. Component of the SWR1 chromatin remodeling complex composed of at least ACT1, ARP4, RVB1, RVB2, ARP6, YAF9, VPS71, VPS72, SWC3, SWC4, SWC5, SWC7 and SWR1, and perhaps BDF1. Interacts with histones H4 (HHF1 and HHF2), H3 (HHT1 and HHT2) and H2A (HTA1 and HTA2).

It is found in the nucleus. Its function is as follows. Chromatin interaction component of the NuA4 histone acetyltransferase complex which is involved in transcriptional activation of selected genes principally by acetylation of nucleosomal histone H4 and H2A. The NuA4 complex is also involved in DNA repair. ARP4 recognizes H2AS128ph (gamma-H2A) and is required for NuA4 complex integrity. Component of the SWR1 complex which mediates the ATP-dependent exchange of histone H2A for the H2A variant HZT1 leading to transcriptional regulation of selected genes by chromatin remodeling. Component of the INO80 complex which remodels chromatin by shifting nucleosomes. Its ability to induce transcription of some phosphate-responsive genes is modulated by inositol polyphosphates. The INO80 complex is involved in DNA repair by associating to gamma-H2A as a response to DNA damage. The protein is Actin-related protein 4 (ARP4) of Saccharomyces cerevisiae (strain ATCC 204508 / S288c) (Baker's yeast).